The sequence spans 203 residues: Inactive ribonuclease-like protein 9 (203 aa).

A signal peptide spans 1–25; it reads MRTPITTHSLLLLLLLQQLLQPVQL. 3 disulfides stabilise this stretch: Cys-96–Cys-151, Cys-114–Cys-166, and Cys-121–Cys-128. 2 N-linked (GlcNAc...) asparagine glycosylation sites follow: Asn-129 and Asn-141.

The protein belongs to the pancreatic ribonuclease family.

The protein resides in the secreted. Functionally, does not exhibit any ribonuclease activity. In Macaca assamensis (Assam macaque), this protein is Inactive ribonuclease-like protein 9 (RNASE9).